We begin with the raw amino-acid sequence, 899 residues long: Gamma-aminobutyric acid type B receptor subunit 1 (899 aa).

Residues 1–19 (MFVRSSWLLLWGTIVWASA) form the signal peptide. The Extracellular segment spans residues 20 to 447 (EPVTLHIGGT…KKHAMTVSNE (428 aa)). Residues Asn69, Asn266, Asn339, Asn353, and Asn371 are each glycosylated (N-linked (GlcNAc...) asparagine). The chain crosses the membrane as a helical span at residues 448–468 (FYYPTILFAVLGIAACVFIYL). Residues 469-487 (FTQKHHERLIIFQSQPECN) are Cytoplasmic-facing. A helical membrane pass occupies residues 488–508 (NILLIGCSLCLFSLFLIGLPS). The Extracellular segment spans residues 509–525 (DDISISESLFPLLCHAR). A helical transmembrane segment spans residues 526–546 (VTILLFGFTFAYGSMFAKVWI). The Cytoplasmic segment spans residues 547–616 (VHRMGATENQ…LNQPISSSKF (70 aa)). Residues 617-637 (YVIVAALTAVDVFVCFVWVLI) traverse the membrane as a helical segment. Residues 638–674 (DPLHLTEQKFPLFTPADSEEDEMIMPVLQQCQSNQQE) are Extracellular-facing. Residues 675-695 (VWIGIIMGFKCLLLVFGTFLS) form a helical membrane-spanning segment. At 696–713 (YETRNLKLRFINDSRFVG) the chain is on the cytoplasmic side. The chain crosses the membrane as a helical span at residues 714-734 (LAIYNVAVMTLVTAPVVTLLI). Over 735 to 741 (HGKVDAN) the chain is Extracellular. Residues 742 to 762 (FAFISLTVLICTYISVGLIYG) traverse the membrane as a helical segment. The Cytoplasmic portion of the chain corresponds to 763–899 (PKIRHIIKVP…SSTSSDEILL (137 aa)). The stretch at 791–842 (KVDQKRYDMLKKENETLQIQIEEKERKIHECKERLEELTKNSETEDMNAQLL) forms a coiled coil. The disordered stretch occupies residues 870–899 (DLQNGNHPGQIYENDNDDDGSSTSSDEILL). A compositionally biased stretch (low complexity) spans 890-899 (SSTSSDEILL).

It belongs to the G-protein coupled receptor 3 family. May form a heterodimer with gbb-2. Expressed in the nervous system, including cholinergic motor neurons, but not in GABAergic motor neurons or muscle.

The protein localises to the cell membrane. Component of a heterodimeric G-protein coupled receptor for GABA, formed by gbb-1 and gbb-2. Within the heterodimeric GABA receptor, only gbb-1 seems to bind agonists, while gbb-2 mediates coupling to G proteins. Ligand binding causes a conformation change that triggers signaling via guanine nucleotide-binding proteins (G proteins) and modulates the activity of down-stream effectors, such as adenylate cyclase. Signaling inhibits adenylate cyclase, stimulates phospholipase A2, activates potassium channels, inactivates voltage-dependent calcium-channels and modulates inositol phospholipid hydrolysis. Calcium is required for high affinity binding to GABA. Plays a critical role in the fine-tuning of inhibitory synaptic transmission. Pre-synaptic GABA receptor inhibits neurotransmitter release by down-regulating high-voltage activated calcium channels, whereas postsynaptic GABA receptor decreases neuronal excitability by activating a prominent inwardly rectifying potassium (Kir) conductance that underlies the late inhibitory postsynaptic potentials. Along with gbb-2, may couple to the G(o)-alpha G-protein goa-1 to negatively regulate cholinergic receptor activity in the presence of high levels of acetylcholine in ventral cord motor neurons. As acetylcholine depolarizes body wall muscles, modulation of acetylcholine levels most likely results in the control of locomotory behavior. Acts in neurons to regulate lifespan, and this may be through G-protein-egl-8/PLC-beta signaling to the transcription factor daf-16/FOXO. This is Gamma-aminobutyric acid type B receptor subunit 1 from Caenorhabditis elegans.